The following is a 331-amino-acid chain: Cathepsin S (331 aa).

Residues 1–16 (MKRLVCVLLVCSSAVA) form the signal peptide. A propeptide spans 17 to 114 (QLHKDPTLDH…ITYKSNPNRI (98 aa)) (activation peptide). N-linked (GlcNAc...) asparagine glycosylation is present at Asn104. 4 disulfides stabilise this stretch: Cys126/Cys224, Cys136/Cys180, Cys170/Cys213, and Cys272/Cys320. The active site involves Cys139. Active-site residues include His278 and Asn298.

It belongs to the peptidase C1 family. As to quaternary structure, monomer.

It is found in the lysosome. Its subcellular location is the secreted. The protein localises to the cytoplasmic vesicle. The protein resides in the phagosome. It catalyses the reaction Similar to cathepsin L, but with much less activity on Z-Phe-Arg-|-NHMec, and more activity on the Z-Val-Val-Arg-|-Xaa compound.. Functionally, thiol protease. Key protease responsible for the removal of the invariant chain from MHC class II molecules and MHC class II antigen presentation. The bond-specificity of this proteinase is in part similar to the specificities of cathepsin L. In Homo sapiens (Human), this protein is Cathepsin S (CTSS).